A 701-amino-acid chain; its full sequence is MQGNPLVVEVGQVAKQANGATVVRYGDSTVLTAAVMSKKMATGDFFPLQVNYEEKMYAAGKFPGGFMKREGRPSTDATLTARLIDRPIRPMFAEGFRNEVQVINTVLSYDENASAPMAAMFGSSLALSISDIPFNGPIAGVQVGYIDGEFIINPDKEQMEASLLELTVAGSKEAINMVESGAKELSEDIMLEALLKGHQAIQELIAFQEQIVAVVGKEKAEVELLQVDADLQADIVAKYNAQLQKAVQVEEKKAREAATEAVKEMVKAEYEERYAEDENLATIMRDVAEILEQMEHAEVRRLITEDKIRPDGRKIDEIRPLDAVVDFLPKVHGSGLFTRGQTQALSILTLAPMGETQIIDGLAPEYKKRFLHHYNFPQYSVGETGRYGAAGRREIGHGALGERALEQVLPSLEEFPYAIRLVAEVLESNGSSSQASICAGTLALMAGGVPIKAPVAGIAMGLISDGTNYTVLTDIQGLEDHFGDMDFKVAGTREGITALQMDIKIAGITPQILEEALAQAKKARFEILDVIEATIAEPRPELAPTAPKIDTIKIDVDKIKVVIGKGGETIDKIIAETGVKIDIDDEGNVSIYSSDQAAINRTKEIIAGLVREAKVGEVYHAKVVRIEKFGAFVNLFDKTDALVHISEIAWTRTTNVSDVLEVGEDVDVKVIKIDEKGRVDASMKALIPRPPKPEKKEEKHD.

Mg(2+) contacts are provided by Asp480 and Asp486. The region spanning 547–606 (PKIDTIKIDVDKIKVVIGKGGETIDKIIAETGVKIDIDDEGNVSIYSSDQAAINRTKEII) is the KH domain. One can recognise an S1 motif domain in the interval 616-684 (GEVYHAKVVR…EKGRVDASMK (69 aa)). Positions 682–701 (SMKALIPRPPKPEKKEEKHD) are disordered. Positions 691 to 701 (PKPEKKEEKHD) are enriched in basic and acidic residues.

It belongs to the polyribonucleotide nucleotidyltransferase family. Mg(2+) serves as cofactor.

Its subcellular location is the cytoplasm. The catalysed reaction is RNA(n+1) + phosphate = RNA(n) + a ribonucleoside 5'-diphosphate. Its function is as follows. Involved in mRNA degradation. Catalyzes the phosphorolysis of single-stranded polyribonucleotides processively in the 3'- to 5'-direction. The sequence is that of Polyribonucleotide nucleotidyltransferase from Streptococcus pyogenes serotype M12 (strain MGAS2096).